Here is a 437-residue protein sequence, read N- to C-terminus: MFEIREKPEMVERAMLVSVYFDPSEAGEKQAMLDELEDLVSNLGIGIAGKHLIKSRDMHAKFLCGTGKAQEVKQLALDCRADCVVFDNMLSPSQQREWERLVDECVIDREEVILDIFARRARTREATLQVELARMQYSLPRMARMWNHLDRQGGGSGGGKGGGGAARGEGEKQIEVDRRLARARIEAIQRELVLVTRQRATQRKERERQAVATAAIVGYTNAGKSSLLSLVSGSEVMARDMLFATLDTTTRKIELPHGQPLLLTDTVGFIRNLPHRLVEAFKSTLEEAVLADFLIQVVDASDPEAVRHYETTLEVLNELGAGDKPMIVVLNKVDLVPEERRGALETLLAPHFSGRVVPMSVKEGNGEGDLLNACVEMLESRVRRARFLIPYTRSDLVAAMHSEGKVFSTEYVEEGTLLEAVLPVAFYNKLESFLADR.

The tract at residues 150-173 (DRQGGGSGGGKGGGGAARGEGEKQ) is disordered. The segment covering 152–167 (QGGGSGGGKGGGGAAR) has biased composition (gly residues). Residues 212-382 (ATAAIVGYTN…ACVEMLESRV (171 aa)) enclose the Hflx-type G domain. GTP-binding positions include 218-225 (GYTNAGKS), 243-247 (FATLD), 265-268 (DTVG), 331-334 (NKVD), and 360-362 (SVK). 2 residues coordinate Mg(2+): Ser225 and Thr245.

It belongs to the TRAFAC class OBG-HflX-like GTPase superfamily. HflX GTPase family. Monomer. Associates with the 50S ribosomal subunit. Mg(2+) is required as a cofactor.

The protein resides in the cytoplasm. Its function is as follows. GTPase that associates with the 50S ribosomal subunit and may have a role during protein synthesis or ribosome biogenesis. This is GTPase HflX from Akkermansia muciniphila (strain ATCC BAA-835 / DSM 22959 / JCM 33894 / BCRC 81048 / CCUG 64013 / CIP 107961 / Muc).